Consider the following 214-residue polypeptide: Phosphoenolpyruvate guanylyltransferase (214 aa).

Residues Thr148, Gly163, and Ser166 each contribute to the phosphoenolpyruvate site.

This sequence belongs to the CofC family.

The catalysed reaction is phosphoenolpyruvate + GTP + H(+) = enolpyruvoyl-2-diphospho-5'-guanosine + diphosphate. Its pathway is cofactor biosynthesis; coenzyme F420 biosynthesis. In terms of biological role, guanylyltransferase that catalyzes the activation of phosphoenolpyruvate (PEP) as enolpyruvoyl-2-diphospho-5'-guanosine, via the condensation of PEP with GTP. It is involved in the biosynthesis of coenzyme F420, a hydride carrier cofactor. The polypeptide is Phosphoenolpyruvate guanylyltransferase (Mycobacterium tuberculosis (strain KZN 1435 / MDR)).